The following is a 206-amino-acid chain: Pyridoxine/pyridoxamine 5'-phosphate oxidase (206 aa).

FMN is bound by residues Arg53–Lys58, Tyr68–Thr69, Lys75, and Gln97. Residue Lys58 participates in substrate binding. 3 residues coordinate substrate: Tyr115, Arg119, and Ser123. Residues Gln132–Ser133 and Trp177 each bind FMN. Position 183-185 (Arg183–His185) interacts with substrate. FMN is bound at residue Arg187.

This sequence belongs to the pyridoxamine 5'-phosphate oxidase family. In terms of assembly, homodimer. Requires FMN as cofactor.

The enzyme catalyses pyridoxamine 5'-phosphate + O2 + H2O = pyridoxal 5'-phosphate + H2O2 + NH4(+). The catalysed reaction is pyridoxine 5'-phosphate + O2 = pyridoxal 5'-phosphate + H2O2. It participates in cofactor metabolism; pyridoxal 5'-phosphate salvage; pyridoxal 5'-phosphate from pyridoxamine 5'-phosphate: step 1/1. The protein operates within cofactor metabolism; pyridoxal 5'-phosphate salvage; pyridoxal 5'-phosphate from pyridoxine 5'-phosphate: step 1/1. Its function is as follows. Catalyzes the oxidation of either pyridoxine 5'-phosphate (PNP) or pyridoxamine 5'-phosphate (PMP) into pyridoxal 5'-phosphate (PLP). The protein is Pyridoxine/pyridoxamine 5'-phosphate oxidase of Agrobacterium fabrum (strain C58 / ATCC 33970) (Agrobacterium tumefaciens (strain C58)).